Consider the following 428-residue polypeptide: Histidine--tRNA ligase (428 aa).

This sequence belongs to the class-II aminoacyl-tRNA synthetase family. Homodimer.

The protein localises to the cytoplasm. The enzyme catalyses tRNA(His) + L-histidine + ATP = L-histidyl-tRNA(His) + AMP + diphosphate + H(+). The polypeptide is Histidine--tRNA ligase (Buchnera aphidicola subsp. Schizaphis graminum (strain Sg)).